The sequence spans 1057 residues: Probable sucrose-phosphate synthase 1 (1057 aa).

Residues Arg-103 to Thr-115 are compositionally biased toward basic and acidic residues. 3 disordered regions span residues Arg-103 to Ser-143, Pro-439 to Asp-459, and Arg-670 to Leu-693. The segment covering Gly-442–Glu-452 has biased composition (acidic residues).

This sequence belongs to the glycosyltransferase 1 family. Homodimer or homotetramer.

It catalyses the reaction beta-D-fructose 6-phosphate + UDP-alpha-D-glucose = sucrose 6(F)-phosphate + UDP + H(+). It participates in glycan biosynthesis; sucrose biosynthesis; sucrose from D-fructose 6-phosphate and UDP-alpha-D-glucose: step 1/2. With respect to regulation, activity is regulated by phosphorylation and moderated by concentration of metabolites and light. Its function is as follows. Plays a role in photosynthetic sucrose synthesis by catalyzing the rate-limiting step of sucrose biosynthesis from UDP-glucose and fructose- 6-phosphate. Involved in the regulation of carbon partitioning in the leaves of plants. May regulate the synthesis of sucrose and therefore play a major role as a limiting factor in the export of photoassimilates out of the leaf. Plays a role for sucrose availability that is essential for plant growth and fiber elongation. This is Probable sucrose-phosphate synthase 1 (SPS1) from Citrus unshiu (Satsuma mandarin).